Here is a 273-residue protein sequence, read N- to C-terminus: Ribosomal RNA small subunit methyltransferase A (273 aa).

S-adenosyl-L-methionine is bound by residues N23, I25, G50, E72, D97, and N116.

Belongs to the class I-like SAM-binding methyltransferase superfamily. rRNA adenine N(6)-methyltransferase family. RsmA subfamily.

It localises to the cytoplasm. The catalysed reaction is adenosine(1518)/adenosine(1519) in 16S rRNA + 4 S-adenosyl-L-methionine = N(6)-dimethyladenosine(1518)/N(6)-dimethyladenosine(1519) in 16S rRNA + 4 S-adenosyl-L-homocysteine + 4 H(+). Specifically dimethylates two adjacent adenosines (A1518 and A1519) in the loop of a conserved hairpin near the 3'-end of 16S rRNA in the 30S particle. May play a critical role in biogenesis of 30S subunits. In Rickettsia akari (strain Hartford), this protein is Ribosomal RNA small subunit methyltransferase A.